The following is a 424-amino-acid chain: Serine--tRNA ligase 1 (424 aa).

232-234 is an L-serine binding site; the sequence is TAE. Residue 263-265 participates in ATP binding; it reads RSE. An L-serine-binding site is contributed by glutamate 286. Position 350 to 353 (350 to 353) interacts with ATP; it reads EISS. Serine 386 serves as a coordination point for L-serine.

Belongs to the class-II aminoacyl-tRNA synthetase family. Type-1 seryl-tRNA synthetase subfamily. Homodimer. The tRNA molecule binds across the dimer.

Its subcellular location is the cytoplasm. The catalysed reaction is tRNA(Ser) + L-serine + ATP = L-seryl-tRNA(Ser) + AMP + diphosphate + H(+). The enzyme catalyses tRNA(Sec) + L-serine + ATP = L-seryl-tRNA(Sec) + AMP + diphosphate + H(+). It functions in the pathway aminoacyl-tRNA biosynthesis; selenocysteinyl-tRNA(Sec) biosynthesis; L-seryl-tRNA(Sec) from L-serine and tRNA(Sec): step 1/1. Functionally, catalyzes the attachment of serine to tRNA(Ser). Is also able to aminoacylate tRNA(Sec) with serine, to form the misacylated tRNA L-seryl-tRNA(Sec), which will be further converted into selenocysteinyl-tRNA(Sec). The chain is Serine--tRNA ligase 1 from Clostridium acetobutylicum (strain ATCC 824 / DSM 792 / JCM 1419 / IAM 19013 / LMG 5710 / NBRC 13948 / NRRL B-527 / VKM B-1787 / 2291 / W).